The chain runs to 223 residues: Deoxyribose-phosphate aldolase (223 aa).

Asp91 serves as the catalytic Proton donor/acceptor. The Schiff-base intermediate with acetaldehyde role is filled by Lys153. The active-site Proton donor/acceptor is the Lys182.

The protein belongs to the DeoC/FbaB aldolase family. DeoC type 1 subfamily.

It localises to the cytoplasm. It carries out the reaction 2-deoxy-D-ribose 5-phosphate = D-glyceraldehyde 3-phosphate + acetaldehyde. Its pathway is carbohydrate degradation; 2-deoxy-D-ribose 1-phosphate degradation; D-glyceraldehyde 3-phosphate and acetaldehyde from 2-deoxy-alpha-D-ribose 1-phosphate: step 2/2. Catalyzes a reversible aldol reaction between acetaldehyde and D-glyceraldehyde 3-phosphate to generate 2-deoxy-D-ribose 5-phosphate. The sequence is that of Deoxyribose-phosphate aldolase from Streptococcus pyogenes serotype M12 (strain MGAS2096).